The chain runs to 234 residues: Large ribosomal subunit protein eL6 (234 aa).

The protein belongs to the eukaryotic ribosomal protein eL6 family.

This Mesembryanthemum crystallinum (Common ice plant) protein is Large ribosomal subunit protein eL6 (RPL6).